Reading from the N-terminus, the 204-residue chain is Lymphotoxin-alpha (204 aa).

The signal sequence occupies residues 1-33 (MTPPGRLYLLRVRSAPVLLLLGLLLGLPPGAQG). In terms of domain architecture, THD spans 62-204 (PAAHLIGDPS…SSVFFGAFAL (143 aa)). The N-linked (GlcNAc...) asparagine glycan is linked to Asn95. A disulfide bridge connects residues Cys119 and Cys155.

This sequence belongs to the tumor necrosis factor family. Homotrimer, and heterotrimer of either two LTB and one LTA subunits or (less prevalent) two LTA and one LTB subunits. Interacts with TNFRSF14.

It is found in the secreted. The protein resides in the membrane. Functionally, cytokine that in its homotrimeric form binds to TNFRSF1A/TNFR1, TNFRSF1B/TNFBR and TNFRSF14/HVEM. In its heterotrimeric form with LTB binds to TNFRSF3/LTBR. Lymphotoxin is produced by lymphocytes and is cytotoxic for a wide range of tumor cells in vitro and in vivo. The chain is Lymphotoxin-alpha (LTA) from Canis lupus familiaris (Dog).